A 108-amino-acid chain; its full sequence is Succinate dehydrogenase assembly factor 4, mitochondrial (108 aa).

Over residues 33–46 (NNNNNNNNNNNNNN) the composition is skewed to low complexity. Disordered stretches follow at residues 33–59 (NNNN…KENQ) and 79–108 (NPIT…VSDF). Residues 95-108 (RYNDWERNGRVSDF) are compositionally biased toward basic and acidic residues.

This sequence belongs to the SDHAF4 family. Interacts with SdhA in its FAD-bound form.

The protein resides in the mitochondrion matrix. Its function is as follows. Plays an essential role in the assembly of succinate dehydrogenase (SDH), an enzyme complex (also referred to as respiratory complex II) that is a component of both the tricarboxylic acid (TCA) cycle and the mitochondrial electron transport chain, and which couples the oxidation of succinate to fumarate with the reduction of ubiquinone (coenzyme Q) to ubiquinol. Binds to the flavoprotein subunit SdhA in its FAD-bound form, blocking the generation of excess reactive oxygen species (ROS) and facilitating its assembly with the iron-sulfur protein subunit SdhB into the SDH catalytic dimer. This chain is Succinate dehydrogenase assembly factor 4, mitochondrial, found in Dictyostelium discoideum (Social amoeba).